A 792-amino-acid polypeptide reads, in one-letter code: Phenylalanine--tRNA ligase beta subunit (792 aa).

The tRNA-binding domain maps to 39-150 (APAFHKVVVA…PDAPVGTDFR (112 aa)). The B5 domain maps to 405-480 (PARDPIRLGL…RMYGYNRIAA (76 aa)). Mg(2+) is bound by residues D458, D464, E467, and E468. Residues 698–791 (SKYPPIRRDI…LENRFGARLR (94 aa)) enclose the FDX-ACB domain.

The protein belongs to the phenylalanyl-tRNA synthetase beta subunit family. Type 1 subfamily. In terms of assembly, tetramer of two alpha and two beta subunits. Mg(2+) serves as cofactor.

Its subcellular location is the cytoplasm. The catalysed reaction is tRNA(Phe) + L-phenylalanine + ATP = L-phenylalanyl-tRNA(Phe) + AMP + diphosphate + H(+). This Nitrosospira multiformis (strain ATCC 25196 / NCIMB 11849 / C 71) protein is Phenylalanine--tRNA ligase beta subunit.